A 364-amino-acid polypeptide reads, in one-letter code: Long-wave-sensitive opsin 1 (364 aa).

At 1 to 52 (MAQRWGPQKLAGGQPQAGFEDSTQASIFTYTNNNATRDPFEGPNYHIAPRWV) the chain is on the extracellular side. Ser22 carries O-linked (GlcNAc) serine glycosylation. Asn34 carries N-linked (GlcNAc...) asparagine glycosylation. Residues 53–77 (YHVTSAWMIFVVIASVFTNGLVLAA) form a helical membrane-spanning segment. At 78–89 (TMRFKKLRHPLN) the chain is on the cytoplasmic side. A helical membrane pass occupies residues 90–115 (WILVNLAVADLAETIIASTISVVNQI). Over 116-129 (YGYFVLGHPMCVVE) the chain is Extracellular. An intrachain disulfide couples Cys126 to Cys203. Residues 130 to 149 (GYTVSLCGITGLWSLAIISW) traverse the membrane as a helical segment. The Cytoplasmic portion of the chain corresponds to 150–168 (ERWMVVCKPFGNVRFDAKL). A helical membrane pass occupies residues 169 to 192 (AVAGIAFSWIWAAVWTAPPIFGWS). Over 193–218 (RYWPHGLKTSCGPDVFSGSSYPGVQS) the chain is Extracellular. A helical transmembrane segment spans residues 219-246 (YMIVLMITCCIIPLSVIVLCYLQVWLAI). The Cytoplasmic portion of the chain corresponds to 247-268 (RAVAKQQKESESTQKAEKEVTR). Residues 269 to 292 (MVMVMVFAFCLCWGPYTFFACFAA) traverse the membrane as a helical segment. The Extracellular portion of the chain corresponds to 293 to 300 (AHPGYAFH). The helical transmembrane segment at 301–325 (PLVAALPAYFAKSATIYNPIIYVFM) threads the bilayer. Residue Lys312 is modified to N6-(retinylidene)lysine. At 326–364 (NRQFRNCILQLFGKKVDDSSELSSVSKTEASSVSSVSPA) the chain is on the cytoplasmic side.

The protein belongs to the G-protein coupled receptor 1 family. Opsin subfamily. Post-translationally, phosphorylated on some or all of the serine and threonine residues present in the C-terminal region. The three color pigments are found in the cone photoreceptor cells. Expressed in retina.

The protein localises to the membrane. Visual pigments are the light-absorbing molecules that mediate vision. They consist of an apoprotein, opsin, covalently linked to cis-retinal. This chain is Long-wave-sensitive opsin 1 (OPN1LW), found in Equus caballus (Horse).